Here is a 144-residue protein sequence, read N- to C-terminus: Large ribosomal subunit protein uL15 (144 aa).

The segment at Met1–Gly52 is disordered.

This sequence belongs to the universal ribosomal protein uL15 family. In terms of assembly, part of the 50S ribosomal subunit.

Its function is as follows. Binds to the 23S rRNA. The chain is Large ribosomal subunit protein uL15 from Actinobacillus pleuropneumoniae serotype 7 (strain AP76).